The following is a 501-amino-acid chain: Glycerol kinase (501 aa).

Threonine 12 provides a ligand contact to ADP. ATP is bound by residues threonine 12, threonine 13, and serine 14. A sn-glycerol 3-phosphate-binding site is contributed by threonine 12. Arginine 16 is a binding site for ADP. The sn-glycerol 3-phosphate site is built by arginine 82, glutamate 83, tyrosine 134, and aspartate 244. Arginine 82, glutamate 83, tyrosine 134, aspartate 244, and glutamine 245 together coordinate glycerol. Residues threonine 266 and glycine 310 each contribute to the ADP site. ATP contacts are provided by threonine 266, glycine 310, glutamine 314, and glycine 411. The ADP site is built by glycine 411 and asparagine 415.

The protein belongs to the FGGY kinase family.

It catalyses the reaction glycerol + ATP = sn-glycerol 3-phosphate + ADP + H(+). Its pathway is polyol metabolism; glycerol degradation via glycerol kinase pathway; sn-glycerol 3-phosphate from glycerol: step 1/1. Its activity is regulated as follows. Inhibited by fructose 1,6-bisphosphate (FBP). Functionally, key enzyme in the regulation of glycerol uptake and metabolism. Catalyzes the phosphorylation of glycerol to yield sn-glycerol 3-phosphate. The protein is Glycerol kinase of Methylorubrum populi (strain ATCC BAA-705 / NCIMB 13946 / BJ001) (Methylobacterium populi).